Reading from the N-terminus, the 87-residue chain is Potassium channel toxin Ttr-beta-KTx (87 aa).

The first 19 residues, 1 to 19 (MERKWALLLFLGMVTLVSC), serve as a signal peptide directing secretion. Positions 20 to 27 (GLREKHVQ) are excised as a propeptide. In terms of domain architecture, BetaSPN-type CS-alpha/beta spans 53–87 (QFGCPAYEGYCNNHCQDIKRKDGECHGFKCKCAKD). 3 disulfide bridges follow: Cys56-Cys77, Cys63-Cys82, and Cys67-Cys84.

This sequence belongs to the long chain scorpion toxin family. Class 1 subfamily. Expressed by the venom gland.

Its subcellular location is the secreted. Inhibits voltage-gated potassium channel. The polypeptide is Potassium channel toxin Ttr-beta-KTx (Tityus trivittatus (Argentinean scorpion)).